The primary structure comprises 156 residues: UPF0178 protein Jann_2168 (156 aa).

Belongs to the UPF0178 family.

The polypeptide is UPF0178 protein Jann_2168 (Jannaschia sp. (strain CCS1)).